Consider the following 469-residue polypeptide: MATASEILKQIKENDVKFVDLRFTDRRASLQHVTMDVVCVDEDMFADGVMFDGFSIGGWKAINESDMVLMPDTETVHMDPFFAQSTMVIVCDILDPVSGEAYNRDRRGTAKKAEAYLKASGIGDTVFVGREAEFFVFDDVKYKADPYNTGFKLDSTELPSNDDTDYETGNLGHRPRVKGGYFPVPPVDSAQDMRSEMLTVLSEMGVVVEKHHHEVAAAQHDTLVRNADELGIKFKMQIYKYVVHQVANAYGKTATFMPKPIFGDNGSGMHVHQSIWKGGKPTFAGDEYAGLSESCLFYIGGIIKHAKAINAFTNPSTNSYKRFVPGYEAPVLLAYSARNRSASCRIPFGSNPKAKRVEVRFPDPTANPYLAFAAMLMAGLDGIKNKIHPGKAMDKDLYDLPPKELKKIPTVCGSLRQALESLDKDRKFLTAGGVFDDDQIDAFIELKMAEVMRFEMTPHPVEYDMYYSA.

The 86-residue stretch at Asn14–Gly99 folds into the GS beta-grasp domain. Positions Arg106 to Ala469 constitute a GS catalytic domain. Mg(2+)-binding residues include Glu131 and Glu133. Residue Glu209 participates in ATP binding. Residues Glu214 and Asp221 each coordinate Mg(2+). L-glutamate contacts are provided by residues Asn265–Gly266 and Gly266. Position 270 (His270) interacts with Mg(2+). ATP is bound by residues His272–Ser274 and Ser274. 3 residues coordinate L-glutamate: Arg322, Glu328, and Arg340. The ATP site is built by Arg340, Arg345, and Lys353. Glu358 serves as a coordination point for Mg(2+). L-glutamate is bound at residue Arg360. Tyr398 is subject to O-AMP-tyrosine.

Belongs to the glutamine synthetase family. As to quaternary structure, oligomer of 12 subunits arranged in the form of two hexameric ring. Mg(2+) serves as cofactor.

The protein localises to the cytoplasm. The enzyme catalyses L-glutamate + NH4(+) + ATP = L-glutamine + ADP + phosphate + H(+). Its activity is regulated as follows. The activity of this enzyme could be controlled by adenylation under conditions of abundant glutamine. Functionally, catalyzes the ATP-dependent biosynthesis of glutamine from glutamate and ammonia. The chain is Glutamine synthetase from Rhizobium leguminosarum bv. viciae.